A 191-amino-acid chain; its full sequence is dCTP deaminase, dUMP-forming (191 aa).

Residues 101–106 (KSSLGR), aspartate 119, 127–129 (TLE), glutamine 148, tyrosine 162, and glutamine 174 contribute to the dCTP site. Residue glutamate 129 is the Proton donor/acceptor of the active site. Residues 169–191 (NRYQGQRGPTASRSHLNFHRTRI) form a disordered region. A compositionally biased stretch (polar residues) spans 171–183 (YQGQRGPTASRSH).

Belongs to the dCTP deaminase family. As to quaternary structure, homotrimer.

It catalyses the reaction dCTP + 2 H2O = dUMP + NH4(+) + diphosphate. It functions in the pathway pyrimidine metabolism; dUMP biosynthesis; dUMP from dCTP: step 1/1. Bifunctional enzyme that catalyzes both the deamination of dCTP to dUTP and the hydrolysis of dUTP to dUMP without releasing the toxic dUTP intermediate. This chain is dCTP deaminase, dUMP-forming, found in Pseudarthrobacter chlorophenolicus (strain ATCC 700700 / DSM 12829 / CIP 107037 / JCM 12360 / KCTC 9906 / NCIMB 13794 / A6) (Arthrobacter chlorophenolicus).